Consider the following 396-residue polypeptide: Phosphoglycerate kinase (396 aa).

Residues Asp21–Asn23, Arg36, His59–Lys62, Arg119, and Arg156 contribute to the substrate site. ATP contacts are provided by residues Lys206, Glu325, and Gly352–Ser355.

It belongs to the phosphoglycerate kinase family. Monomer.

Its subcellular location is the cytoplasm. It catalyses the reaction (2R)-3-phosphoglycerate + ATP = (2R)-3-phospho-glyceroyl phosphate + ADP. Its pathway is carbohydrate degradation; glycolysis; pyruvate from D-glyceraldehyde 3-phosphate: step 2/5. In Macrococcus caseolyticus (strain JCSC5402) (Macrococcoides caseolyticum), this protein is Phosphoglycerate kinase.